Consider the following 47-residue polypeptide: MRKIPLNCEACGNRNYNVPKQEGTATRLTLKKYCPKCNAHTIHKESK.

Belongs to the bacterial ribosomal protein bL33 family.

This Staphylococcus aureus (strain MRSA252) protein is Large ribosomal subunit protein bL33C.